We begin with the raw amino-acid sequence, 247 residues long: AA9 family lytic polysaccharide monooxygenase A (247 aa).

The first 19 residues, 1 to 19 (MVRLASLAVLGSVIATASA), serve as a signal peptide directing secretion. 2 residues coordinate Cu(2+): His20 and His100. Cys60 and Cys185 are oxidised to a cystine. His165 provides a ligand contact to O2. A Cu(2+)-binding site is contributed by Tyr182. Residue Asn193 is glycosylated (N-linked (GlcNAc...) asparagine).

This sequence belongs to the polysaccharide monooxygenase AA9 family. The cofactor is Cu(2+).

It is found in the secreted. The enzyme catalyses [(1-&gt;4)-beta-D-glucosyl]n+m + reduced acceptor + O2 = 4-dehydro-beta-D-glucosyl-[(1-&gt;4)-beta-D-glucosyl]n-1 + [(1-&gt;4)-beta-D-glucosyl]m + acceptor + H2O.. Lytic polysaccharide monooxygenase (LPMO) that depolymerizes polysaccharides via the oxidation of scissile alpha- or beta-(1-4)-glycosidic bonds, yielding C4 oxidation products. Catalysis by LPMOs requires the reduction of the active-site copper from Cu(II) to Cu(I) by a reducing agent and H(2)O(2) or O(2) as a cosubstrate. Shows C4-oxidative cleavage of amorphous cellulose and soluble cello-oligosaccharides. Also active on xyloglucan, mixed-linkage beta-glucan, and glucomannan. Not active on crystalline forms of cellulose. Has higher affinity for linear substrates compared to branched substrates. Catalyzes a fast and specific peroxygenase reaction that is at least two orders of magnitude faster than the apparent monooxygenase reaction. This chain is AA9 family lytic polysaccharide monooxygenase A, found in Schizophyllum commune (strain H4-8 / FGSC 9210) (Split gill fungus).